A 209-amino-acid chain; its full sequence is Large ribosomal subunit protein uL3 (209 aa).

The tract at residues 128-166 is disordered; it reads FGGGSRTHGQSDRLRAPGSVGGSSDPSRTFKGTRMAGRM.

It belongs to the universal ribosomal protein uL3 family. In terms of assembly, part of the 50S ribosomal subunit. Forms a cluster with proteins L14 and L19.

Functionally, one of the primary rRNA binding proteins, it binds directly near the 3'-end of the 23S rRNA, where it nucleates assembly of the 50S subunit. In Chlorobaculum parvum (strain DSM 263 / NCIMB 8327) (Chlorobium vibrioforme subsp. thiosulfatophilum), this protein is Large ribosomal subunit protein uL3.